Here is a 153-residue protein sequence, read N- to C-terminus: uncharacterized protein (153 aa).

Positions 72 to 98 are disordered; sequence LPISKTNDAERSQQTTKAPVMERTESS.

The protein localises to the cytoplasm. It localises to the nucleus. This is an uncharacterized protein from Schizosaccharomyces pombe (strain 972 / ATCC 24843) (Fission yeast).